A 356-amino-acid polypeptide reads, in one-letter code: ATP-dependent 6-phosphofructokinase (356 aa).

Residues G15, 78–79 (KG), and 115–118 (GEGT) each bind ATP. Residue E116 coordinates Mg(2+). Substrate is bound by residues 138 to 140 (TID), R175, 182 to 184 (MGR), E235, R272, and 278 to 281 (HLQR). D140 acts as the Proton acceptor in catalysis.

It belongs to the phosphofructokinase type A (PFKA) family. Mixed-substrate PFK group III subfamily. In terms of assembly, homodimer or homotetramer. The cofactor is Mg(2+).

It is found in the cytoplasm. It carries out the reaction beta-D-fructose 6-phosphate + ATP = beta-D-fructose 1,6-bisphosphate + ADP + H(+). It participates in carbohydrate degradation; glycolysis; D-glyceraldehyde 3-phosphate and glycerone phosphate from D-glucose: step 3/4. Functionally, catalyzes the phosphorylation of D-fructose 6-phosphate to fructose 1,6-bisphosphate by ATP, the first committing step of glycolysis. The chain is ATP-dependent 6-phosphofructokinase from Chloroflexus aurantiacus (strain ATCC 29366 / DSM 635 / J-10-fl).